Here is a 116-residue protein sequence, read N- to C-terminus: Non-specific lipid-transfer protein 1 (116 aa).

The first 25 residues, 1–25, serve as a signal peptide directing secretion; it reads MARAQLVLVALVAALLLAAPHAAVA. Disulfide bonds link Cys28–Cys75, Cys38–Cys52, Cys53–Cys98, and Cys73–Cys112.

It belongs to the plant LTP family. In terms of tissue distribution, aleurone (external part) of the seeds.

In terms of biological role, plant non-specific lipid-transfer proteins transfer phospholipids as well as galactolipids across membranes. May play a role in wax or cutin deposition in the cell walls of expanding epidermal cells and certain secretory tissues. This chain is Non-specific lipid-transfer protein 1 (LTP), found in Oryza sativa subsp. indica (Rice).